The chain runs to 99 residues: Large ribosomal subunit protein eL30 (99 aa).

This sequence belongs to the eukaryotic ribosomal protein eL30 family.

The polypeptide is Large ribosomal subunit protein eL30 (Methanosarcina acetivorans (strain ATCC 35395 / DSM 2834 / JCM 12185 / C2A)).